Reading from the N-terminus, the 155-residue chain is Probable calcium-binding protein CML44 (155 aa).

EF-hand domains lie at 6 to 41 (ITTN…LGWA), 85 to 120 (DNDE…LGFE), and 130 to 155 (RMIR…ILHV). Asp19, Asn21, Asp23, Glu30, Asp98, Asn100, Asp102, Tyr104, and Glu109 together coordinate Ca(2+).

Its function is as follows. Potential calcium sensor. The protein is Probable calcium-binding protein CML44 (CML44) of Arabidopsis thaliana (Mouse-ear cress).